The sequence spans 240 residues: Late expression factor 5 homolog (240 aa).

The protein belongs to the baculoviridae LEF-5 family.

Functionally, required for late and very late gene expression. This Tortricidae (ClGV) protein is Late expression factor 5 homolog.